We begin with the raw amino-acid sequence, 970 residues long: GEM-interacting protein (970 aa).

S19 is modified (phosphoserine). 3 disordered regions span residues 44–76 (PLLSEDPEPDKTPTATVTNEASCWSGPSPEGPV), 224–263 (SEDLRARSQGSPEDSAPQASPGPSKQQERRRRSREEAQAK), and 377–478 (PLDI…ENGL). The span at 56–65 (PTATVTNEAS) shows a compositional bias: polar residues. S71, S231, S234, S243, S437, and S441 each carry phosphoserine. Residues 81 to 344 (EELDLRLIRT…CCAPFEPGQR (264 aa)) enclose the F-BAR domain. Residues 231–246 (SQGSPEDSAPQASPGP) are compositionally biased toward polar residues. Acidic residues predominate over residues 459–472 (SSDDFEERDPDLGD). The Phorbol-ester/DAG-type zinc-finger motif lies at 493–537 (THQLRRLRGPAKCRECEAFMVSGTECEECFLTCHKRCLETLLILC). Residues 554-757 (LQLPRDFPEE…FLIVHYEQIF (204 aa)) form the Rho-GAP domain. Residue T660 is modified to Phosphothreonine. Residues 762–878 (LPQATEPPPQ…PVKYPRGGVR (117 aa)) form a disordered region. The span at 766-778 (TEPPPQDSSPAPG) shows a compositional bias: pro residues. The segment covering 815-830 (EQHPTATPTEIPTPQS) has biased composition (polar residues). Positions 831-844 (DQREDVAEDTKDGG) are enriched in basic and acidic residues. Positions 847 to 863 (VSSQGPEDSLLGTQSRG) are enriched in polar residues. A phosphoserine mark is found at S885, S907, S914, S919, and S923. The interval 897–932 (ETPITSVPRGSLRGRGPSPAAASPEGSPLRRTPLPK) is disordered. A compositionally biased stretch (low complexity) spans 910 to 923 (GRGPSPAAASPEGS).

As to quaternary structure, interacts with GEM through its N-terminal.

Its function is as follows. Stimulates, in vitro and in vivo, the GTPase activity of RhoA. The protein is GEM-interacting protein (GMIP) of Homo sapiens (Human).